The following is a 300-amino-acid chain: 2-oxoglutarate-dependent dioxygenase DAO (300 aa).

Residues 149-252 form the Fe2OG dioxygenase domain; it reads WPCQFRMNRY…VSIAMFLLAP (104 aa). Positions 173, 175, and 232 each coordinate Fe cation. Arg-242 serves as a coordination point for 2-oxoglutarate.

This sequence belongs to the iron/ascorbate-dependent oxidoreductase family. It depends on Fe(2+) as a cofactor.

In terms of biological role, 2-oxoglutarate-dependent dioxygenase essential for auxin catabolism and maintenance of auxin homeostasis in reproductive organs. Catalyzes the irreversible oxidation of indole-3-acetic acid (IAA) to the biologically inactive 2-oxoindole-3-acetic acid (OxIAA). The sequence is that of 2-oxoglutarate-dependent dioxygenase DAO (DAO) from Oryza sativa subsp. indica (Rice).